The following is a 591-amino-acid chain: Transcription factor COE1-A (591 aa).

The interaction with DNA stretch occupies residues 63–66; sequence RKSN. The C5-type zinc finger occupies 151 to 170; sequence CRVLLTHEIMCSRCCDKKSC. Interaction with DNA stretches follow at residues 197–204 and 236–239; these read NCLKNAGN and NNSK. Positions 262-344 constitute an IPT/TIG domain; it reads PCIKAISPSE…CKGTPGRFIY (83 aa). The segment covering 454–466 has biased composition (polar residues); sequence ANQGFSRNTSSVS. Residues 454–484 form a disordered region; that stretch reads ANQGFSRNTSSVSPHGYVPSTTPQQSSYSTV. Residues 471 to 484 are compositionally biased toward low complexity; it reads VPSTTPQQSSYSTV.

The protein belongs to the COE family. As to quaternary structure, forms either a homodimer or a heterodimer with a related family member. In terms of tissue distribution, detected in B cells.

It is found in the nucleus. Functionally, transcriptional activator. The protein is Transcription factor COE1-A of Danio rerio (Zebrafish).